The following is a 103-amino-acid chain: Large ribosomal subunit protein bL21 (103 aa).

It belongs to the bacterial ribosomal protein bL21 family. As to quaternary structure, part of the 50S ribosomal subunit. Contacts protein L20.

Its function is as follows. This protein binds to 23S rRNA in the presence of protein L20. The polypeptide is Large ribosomal subunit protein bL21 (Nitrosomonas europaea (strain ATCC 19718 / CIP 103999 / KCTC 2705 / NBRC 14298)).